We begin with the raw amino-acid sequence, 79 residues long: TALFLAMHYTSDIATAFSSVAHICRDVNYGWLIRNMHANGASFFFICIYLHIGRGLYYGSYLYKETWNVGVVLLLLTMM.

Transmembrane regions (helical) follow at residues 1-7, 31-52, and 67-79; these read TALFLAM, WLIR…YLHI, and WNVG…LTMM. Heme b-binding residues include His37 and His51.

The protein belongs to the cytochrome b family. As to quaternary structure, the cytochrome bc1 complex contains 3 respiratory subunits (MT-CYB, CYC1 and UQCRFS1), 2 core proteins (UQCRC1 and UQCRC2) and probably 6 low-molecular weight proteins. The cofactor is heme b.

It is found in the mitochondrion inner membrane. Its function is as follows. Component of the ubiquinol-cytochrome c reductase complex (complex III or cytochrome b-c1 complex) that is part of the mitochondrial respiratory chain. The b-c1 complex mediates electron transfer from ubiquinol to cytochrome c. Contributes to the generation of a proton gradient across the mitochondrial membrane that is then used for ATP synthesis. This Amphilophus citrinellus (Midas cichlid) protein is Cytochrome b (mt-cyb).